A 433-amino-acid polypeptide reads, in one-letter code: Serine--tRNA ligase (433 aa).

L-serine is bound at residue 235-237 (TSE). Residue 266-268 (RSE) coordinates ATP. Glu289 serves as a coordination point for L-serine. 353-356 (EISS) is a binding site for ATP. Ser388 contacts L-serine.

The protein belongs to the class-II aminoacyl-tRNA synthetase family. Type-1 seryl-tRNA synthetase subfamily. Homodimer. The tRNA molecule binds across the dimer.

The protein localises to the cytoplasm. The enzyme catalyses tRNA(Ser) + L-serine + ATP = L-seryl-tRNA(Ser) + AMP + diphosphate + H(+). The catalysed reaction is tRNA(Sec) + L-serine + ATP = L-seryl-tRNA(Sec) + AMP + diphosphate + H(+). The protein operates within aminoacyl-tRNA biosynthesis; selenocysteinyl-tRNA(Sec) biosynthesis; L-seryl-tRNA(Sec) from L-serine and tRNA(Sec): step 1/1. In terms of biological role, catalyzes the attachment of serine to tRNA(Ser). Is also able to aminoacylate tRNA(Sec) with serine, to form the misacylated tRNA L-seryl-tRNA(Sec), which will be further converted into selenocysteinyl-tRNA(Sec). This is Serine--tRNA ligase from Burkholderia cepacia (Pseudomonas cepacia).